The sequence spans 215 residues: Ran-specific GTPase-activating protein 1 (215 aa).

2 stretches are compositionally biased toward basic and acidic residues: residues 1–18 and 26–35; these read MSAE…EEQK and VASKQTEEAK. Positions 1–78 are disordered; sequence MSAEQEKKTQ…ASPEVHFEPI (78 aa). S70 is subject to Phosphoserine. Residues 74-210 enclose the RanBD1 domain; it reads HFEPIVKLSA…FEKYQEENAK (137 aa).

Belongs to the RANBP1 family.

The protein localises to the cytoplasm. Stimulates the GTPase activity in the presence of RNA1. May potentiate the action of RanGAP1 (RNA1), thus playing the role of a negative regulator. This is Ran-specific GTPase-activating protein 1 (sbp1) from Schizosaccharomyces pombe (strain 972 / ATCC 24843) (Fission yeast).